A 363-amino-acid chain; its full sequence is 24-methylenesterol C-methyltransferase 2 (363 aa).

A helical transmembrane segment spans residues 6 to 26; the sequence is MAWTAAGVGMALVYWFVWVMG.

This sequence belongs to the class I-like SAM-binding methyltransferase superfamily. Erg6/SMT family.

The protein resides in the membrane. The catalysed reaction is 24-methylidenelophenol + S-adenosyl-L-methionine = (Z)-24-ethylidenelophenol + S-adenosyl-L-homocysteine + H(+). The protein operates within steroid biosynthesis; sterol biosynthesis. Functionally, catalyzes the methyl transfer from S-adenosyl-methionine to the methylene group of 24-methylene lophenol to form 24-ethylidene lophenol. This Oryza sativa subsp. japonica (Rice) protein is 24-methylenesterol C-methyltransferase 2 (Smt2-1).